A 136-amino-acid polypeptide reads, in one-letter code: Small integral membrane protein 23 (136 aa).

Over 1–31 (MTIQKTGCRGREAAEVVEQRRRSHHCDDRKQ) the chain is Cytoplasmic. Residues 32 to 52 (TLLALLILVLYLGMGISGSSW) form a helical; Signal-anchor for type II membrane protein membrane-spanning segment. Residues 53–136 (EVSGQTKDCN…DLRPEDPCFT (84 aa)) lie on the Extracellular side of the membrane. The stretch at 92–124 (LKINLHGFLEKLEKEVRELEQLVRDLEFWLDAL) forms a coiled coil.

The protein resides in the membrane. The polypeptide is Small integral membrane protein 23 (Smim23) (Mus musculus (Mouse)).